We begin with the raw amino-acid sequence, 72 residues long: UPF0346 protein GTNG_1419 (72 aa).

This sequence belongs to the UPF0346 family.

This is UPF0346 protein GTNG_1419 from Geobacillus thermodenitrificans (strain NG80-2).